The sequence spans 476 residues: Tubulointerstitial nephritis antigen (476 aa).

Asn-38 is a glycosylation site (N-linked (GlcNAc...) asparagine). An SMB domain is found at 59-107 (NFGCCEDRDDGCVTEFYAANALCYCDKFCDRENSDCCPDYKSFCREEKE). Disulfide bonds link Cys-63-Cys-70, Cys-70-Cys-102, Cys-81-Cys-83, Cys-81-Cys-95, Cys-87-Cys-94, and Cys-95-Cys-102. 4 N-linked (GlcNAc...) asparagine glycosylation sites follow: Asn-175, Asn-314, Asn-360, and Asn-455.

This sequence belongs to the peptidase C1 family. Post-translationally, it has been suggested that the active SMB domain may be permitted considerable disulfide bond heterogeneity or variability, thus 2 alternate disulfide patterns based on 3D structures are described with 1 disulfide bond conserved in both. In terms of tissue distribution, expressed in the kidney cortex, small intestine and cornea.

The protein resides in the secreted. It is found in the extracellular space. The protein localises to the extracellular matrix. It localises to the basement membrane. In terms of biological role, mediates adhesion of proximal tubule epithelial cells via integrins alpha3-beta1 and alphaV-beta3. This is a non catalytic peptidase C1 family protein. The polypeptide is Tubulointerstitial nephritis antigen (TINAG) (Homo sapiens (Human)).